A 378-amino-acid chain; its full sequence is MAHDMRWCVGLMTGTVLDGNIDVALLQTDGERIGAFGPHALYPYDAGTNALLKQCLSAAQTWAFNGPEPAIFAEAEARITRAQSDAVACLVETAGLSMRDIAAVGFHGQTVLHRAPAPGRLGQTRQLGNGQDMARRLATDVVYDFRSADMKAGGQGAPLSAIYHSALLDTLDNAHDTAILNLGGVANITARDARGMLAAFDTGPANAPINDFVVHRGLGEMDRDGQLAAQGRVDDARFSTALRHPYLSRPYPKSLDRFDFGHDWVADLSDADGAATLTAFTASAVGRGLDLLPVRPTRLIVCGGGRRNPTLLKMIATYAKVHVDNAEDWGWEGDATEAQCFGYLAMRRLRDLPVTFAETTGVRAPMPAGRIAHGSSPG.

Gly14–Asp22 provides a ligand contact to ATP.

It belongs to the anhydro-N-acetylmuramic acid kinase family.

It carries out the reaction 1,6-anhydro-N-acetyl-beta-muramate + ATP + H2O = N-acetyl-D-muramate 6-phosphate + ADP + H(+). The protein operates within amino-sugar metabolism; 1,6-anhydro-N-acetylmuramate degradation. It participates in cell wall biogenesis; peptidoglycan recycling. Functionally, catalyzes the specific phosphorylation of 1,6-anhydro-N-acetylmuramic acid (anhMurNAc) with the simultaneous cleavage of the 1,6-anhydro ring, generating MurNAc-6-P. Is required for the utilization of anhMurNAc either imported from the medium or derived from its own cell wall murein, and thus plays a role in cell wall recycling. This Jannaschia sp. (strain CCS1) protein is Anhydro-N-acetylmuramic acid kinase 2.